The following is a 60-amino-acid chain: Large ribosomal subunit protein uL30 (60 aa).

Belongs to the universal ribosomal protein uL30 family. In terms of assembly, part of the 50S ribosomal subunit.

The sequence is that of Large ribosomal subunit protein uL30 from Idiomarina loihiensis (strain ATCC BAA-735 / DSM 15497 / L2-TR).